Here is a 197-residue protein sequence, read N- to C-terminus: Adenylate kinase 1 (197 aa).

19-24 (GSGKGT) is a binding site for ATP. Positions 39 to 68 (SSGDLLRAEVQSGSPKGKELKAMMERGELV) are NMP. Residues Ser-40, Arg-45, 95-98 (GYPR), and Gln-102 contribute to the AMP site. Residues 132–142 (KRAETSNRVDD) are LID. Arg-133 lines the ATP pocket. Residues Arg-139 and Arg-150 each coordinate AMP. Position 178 (Gly-178) interacts with ATP.

Belongs to the adenylate kinase family. AK1 subfamily. As to quaternary structure, monomer. It depends on Mg(2+) as a cofactor.

It localises to the cytoplasm. It carries out the reaction AMP + ATP = 2 ADP. It participates in purine metabolism; purine nucleotide biosynthesis. Its function is as follows. Catalyzes the reversible transfer of the terminal phosphate group between ATP and AMP. Plays an important role in cellular energy homeostasis and in adenine nucleotide metabolism. The protein is Adenylate kinase 1 of Schistosoma mansoni (Blood fluke).